A 91-amino-acid polypeptide reads, in one-letter code: Large ribosomal subunit protein bL27 (91 aa).

A compositionally biased stretch (polar residues) spans 1 to 13 (MATKKSGGSSCNG). The disordered stretch occupies residues 1 to 20 (MATKKSGGSSCNGRDSRGRR).

The protein belongs to the bacterial ribosomal protein bL27 family.

The polypeptide is Large ribosomal subunit protein bL27 (Anaplasma phagocytophilum (strain HZ)).